A 157-amino-acid polypeptide reads, in one-letter code: 2-C-methyl-D-erythritol 2,4-cyclodiphosphate synthase (157 aa).

Residues Asp8 and His10 each coordinate a divalent metal cation. 4-CDP-2-C-methyl-D-erythritol 2-phosphate is bound by residues 8–10 (DIH) and 35–36 (HS). Residue His43 participates in a divalent metal cation binding. 4-CDP-2-C-methyl-D-erythritol 2-phosphate is bound by residues 57 to 59 (DIG), 62 to 66 (FPNND), and Lys142.

This sequence belongs to the IspF family. Homotrimer. Requires a divalent metal cation as cofactor.

The catalysed reaction is 4-CDP-2-C-methyl-D-erythritol 2-phosphate = 2-C-methyl-D-erythritol 2,4-cyclic diphosphate + CMP. It functions in the pathway isoprenoid biosynthesis; isopentenyl diphosphate biosynthesis via DXP pathway; isopentenyl diphosphate from 1-deoxy-D-xylulose 5-phosphate: step 4/6. In terms of biological role, involved in the biosynthesis of isopentenyl diphosphate (IPP) and dimethylallyl diphosphate (DMAPP), two major building blocks of isoprenoid compounds. Catalyzes the conversion of 4-diphosphocytidyl-2-C-methyl-D-erythritol 2-phosphate (CDP-ME2P) to 2-C-methyl-D-erythritol 2,4-cyclodiphosphate (ME-CPP) with a corresponding release of cytidine 5-monophosphate (CMP). In Wigglesworthia glossinidia brevipalpis, this protein is 2-C-methyl-D-erythritol 2,4-cyclodiphosphate synthase.